Reading from the N-terminus, the 229-residue chain is Large ribosomal subunit protein uL1 (229 aa).

This sequence belongs to the universal ribosomal protein uL1 family. As to quaternary structure, part of the 50S ribosomal subunit.

Functionally, binds directly to 23S rRNA. The L1 stalk is quite mobile in the ribosome, and is involved in E site tRNA release. Its function is as follows. Protein L1 is also a translational repressor protein, it controls the translation of the L11 operon by binding to its mRNA. The polypeptide is Large ribosomal subunit protein uL1 (Magnetococcus marinus (strain ATCC BAA-1437 / JCM 17883 / MC-1)).